Reading from the N-terminus, the 310-residue chain is Ribosomal protein L11 methyltransferase (310 aa).

S-adenosyl-L-methionine-binding residues include threonine 156, glycine 179, aspartate 201, and asparagine 246.

The protein belongs to the methyltransferase superfamily. PrmA family.

The protein localises to the cytoplasm. It catalyses the reaction L-lysyl-[protein] + 3 S-adenosyl-L-methionine = N(6),N(6),N(6)-trimethyl-L-lysyl-[protein] + 3 S-adenosyl-L-homocysteine + 3 H(+). Functionally, methylates ribosomal protein L11. The chain is Ribosomal protein L11 methyltransferase from Desulfatibacillum aliphaticivorans.